The primary structure comprises 591 residues: Developmental and secondary metabolism regulator VEA1 (591 aa).

The tract at residues 1-22 (MATKASSILHPPNETEHTMSRI) is disordered. Residues 13–22 (NETEHTMSRI) show a composition bias toward basic and acidic residues. Residues 26 to 235 (GKKLTYNLKV…AEQGCRVRIR (210 aa)) form the Velvet domain. The Nuclear localization signal motif lies at 40–45 (ERARAC). The segment at 238–547 (VRMRRREPKP…TSGGSDDEIM (310 aa)) is disordered. The segment covering 245–260 (PKPNKDYGAYDDRRIT) has biased composition (basic and acidic residues). Positions 306–321 (HQQPSPNLAATPQSHL) are enriched in polar residues. Over residues 330–347 (YHAPPPPPTAHPAPPPAY) the composition is skewed to pro residues. The span at 386–395 (YDQSKSSLPM) shows a compositional bias: polar residues. Positions 422 to 433 (PSQLHPTQQYQQ) are enriched in low complexity. A compositionally biased stretch (pro residues) spans 434–448 (PTPPPPPPAAIAPHP). The PEST stretch occupies residues 452–493 (RTPTKPSPSTFFPPTPSRLSVEVDSSNEADDAILNAIRTRRG). Residues 494-516 (YILDEKSGATKRSRDSSDHDLKP) show a composition bias toward basic and acidic residues.

Belongs to the velvet family. VeA subfamily. In terms of assembly, component of the heterotrimeric velvet complex composed of LAE1, VEA1 and VEL2; VEA1 acting as a bridging protein between LAE1 and VEL2.

Its subcellular location is the nucleus. The protein resides in the cytoplasm. Functionally, component of the velvet transcription factor complex that controls sexual/asexual developmental ratio in response to light, promoting sexual development in the darkness while stimulating asexual sporulation under illumination. The velvet complex hat acts as a global regulator for secondary metabolite gene expression. Regulates cleistothecial formation and hyphal growth. Acts as a positive regulator of virulence. The protein is Developmental and secondary metabolism regulator VEA1 of Ajellomyces capsulatus (Darling's disease fungus).